The chain runs to 54 residues: MSGTGVLLLTLLLLVTMATSDDACSLLNGDDCGPGELCCTPSGDHQGTCETSCW.

A signal peptide spans 1-19 (MSGTGVLLLTLLLLVTMAT). Intrachain disulfides connect Cys24–Cys39, Cys32–Cys49, and Cys38–Cys53.

In terms of tissue distribution, expressed by the venom duct.

Its subcellular location is the secreted. Probable neurotoxin. The chain is Conotoxin Cal6.17 from Californiconus californicus (California cone).